Reading from the N-terminus, the 444-residue chain is Phosphoribosylamine--glycine ligase (444 aa).

In terms of domain architecture, ATP-grasp spans 109–324 (RNLFKKYNIK…FLEVCEAIVN (216 aa)). 140–202 (LTEKGIKAVV…EEKLEGVEFT (63 aa)) lines the ATP pocket. Residues Gln-282, Glu-294, and Asn-296 each contribute to the Mg(2+) site. Residues Gln-282, Glu-294, and Asn-296 each coordinate Mn(2+).

Belongs to the GARS family. Mg(2+) is required as a cofactor. The cofactor is Mn(2+).

The enzyme catalyses 5-phospho-beta-D-ribosylamine + glycine + ATP = N(1)-(5-phospho-beta-D-ribosyl)glycinamide + ADP + phosphate + H(+). Its pathway is purine metabolism; IMP biosynthesis via de novo pathway; N(1)-(5-phospho-D-ribosyl)glycinamide from 5-phospho-alpha-D-ribose 1-diphosphate: step 2/2. This is Phosphoribosylamine--glycine ligase from Methanocaldococcus jannaschii (strain ATCC 43067 / DSM 2661 / JAL-1 / JCM 10045 / NBRC 100440) (Methanococcus jannaschii).